Consider the following 312-residue polypeptide: MSAMEAADVFHRARGRTLDAFSSEKEREWKGPFYFVQGADTQFGLMKAWSTGNCDAGGDEWGQEIRLTEQAVEAINKLNPKPKFFVLCGDLVHAMPGTPWRQEQTRDLQRVLKAVDQDIPLVMVSGNHDLGNAPTAETVEEFCQTWGDDYFSFWVGGVLFLVLNSQFLYDASRCPALKQAQDHWLDQQLNIAEQKQCQHAIVFQHIPLFLQSIDEDDDYFNLTKTVRKELAEKLTRAGIRAVFSGHYHRNAGGTYQNLDMVVSSAIGCQLGKDTHGLRVVAITAEKIVHRYYSLDELSQGGVEEDLKELLKE.

A Phosphoserine modification is found at Ser-2. The tract at residues Lys-47–Asn-250 is catalytic. A divalent metal cation-binding residues include Asp-90, Asn-127, and His-246. A Phosphoserine modification is found at Ser-293.

It belongs to the metallophosphoesterase superfamily. CPPED1 family. The cofactor is a divalent metal cation.

It is found in the cytoplasm. The catalysed reaction is O-phospho-L-seryl-[protein] + H2O = L-seryl-[protein] + phosphate. It carries out the reaction O-phospho-L-threonyl-[protein] + H2O = L-threonyl-[protein] + phosphate. Its function is as follows. Protein phosphatase that dephosphorylates AKT family kinase specifically at 'Ser-473', blocking cell cycle progression and promoting cell apoptosis. May play an inhibitory role in glucose uptake by adipocytes. This Mus musculus (Mouse) protein is Serine/threonine-protein phosphatase CPPED1 (Cpped1).